The primary structure comprises 494 residues: Ketol-acid reductoisomerase (NADP(+)) (494 aa).

Residues 14–208 form the KARI N-terminal Rossmann domain; sequence LDQIGRCRFM…GGDRAGVLES (195 aa). NADP(+)-binding positions include 45-48, R68, R76, S78, and 108-110; these read CGAQ and DKQ. The active site involves H132. Position 158 (G158) interacts with NADP(+). 2 KARI C-terminal knotted domains span residues 209-344 and 345-487; these read SFVA…NAPE and YNGK…MTDM. The Mg(2+) site is built by D217, E221, E389, and E393. S414 serves as a coordination point for substrate.

It belongs to the ketol-acid reductoisomerase family. It depends on Mg(2+) as a cofactor.

The enzyme catalyses (2R)-2,3-dihydroxy-3-methylbutanoate + NADP(+) = (2S)-2-acetolactate + NADPH + H(+). It catalyses the reaction (2R,3R)-2,3-dihydroxy-3-methylpentanoate + NADP(+) = (S)-2-ethyl-2-hydroxy-3-oxobutanoate + NADPH + H(+). The protein operates within amino-acid biosynthesis; L-isoleucine biosynthesis; L-isoleucine from 2-oxobutanoate: step 2/4. It functions in the pathway amino-acid biosynthesis; L-valine biosynthesis; L-valine from pyruvate: step 2/4. Its function is as follows. Involved in the biosynthesis of branched-chain amino acids (BCAA). Catalyzes an alkyl-migration followed by a ketol-acid reduction of (S)-2-acetolactate (S2AL) to yield (R)-2,3-dihydroxy-isovalerate. In the isomerase reaction, S2AL is rearranged via a Mg-dependent methyl migration to produce 3-hydroxy-3-methyl-2-ketobutyrate (HMKB). In the reductase reaction, this 2-ketoacid undergoes a metal-dependent reduction by NADPH to yield (R)-2,3-dihydroxy-isovalerate. This Pseudoalteromonas atlantica (strain T6c / ATCC BAA-1087) protein is Ketol-acid reductoisomerase (NADP(+)).